A 155-amino-acid chain; its full sequence is Small ribosomal subunit protein uS7 (155 aa).

This sequence belongs to the universal ribosomal protein uS7 family. As to quaternary structure, part of the 30S ribosomal subunit. Contacts proteins S9 and S11.

In terms of biological role, one of the primary rRNA binding proteins, it binds directly to 16S rRNA where it nucleates assembly of the head domain of the 30S subunit. Is located at the subunit interface close to the decoding center, probably blocks exit of the E-site tRNA. The polypeptide is Small ribosomal subunit protein uS7 (Nautilia profundicola (strain ATCC BAA-1463 / DSM 18972 / AmH)).